A 378-amino-acid chain; its full sequence is Acetylornithine deacetylase (378 aa).

A Zn(2+)-binding site is contributed by His-76. Residue Asp-78 is part of the active site. Position 108 (Asp-108) interacts with Zn(2+). Glu-140 is an active-site residue. Residues Glu-141, Glu-165, and His-351 each contribute to the Zn(2+) site.

It belongs to the peptidase M20A family. ArgE subfamily. In terms of assembly, homodimer. It depends on Zn(2+) as a cofactor. Co(2+) serves as cofactor. Glutathione is required as a cofactor.

The protein resides in the cytoplasm. The enzyme catalyses N(2)-acetyl-L-ornithine + H2O = L-ornithine + acetate. It participates in amino-acid biosynthesis; L-arginine biosynthesis; L-ornithine from N(2)-acetyl-L-ornithine (linear): step 1/1. Functionally, catalyzes the hydrolysis of the amide bond of N(2)-acetylated L-amino acids. Cleaves the acetyl group from N-acetyl-L-ornithine to form L-ornithine, an intermediate in L-arginine biosynthesis pathway, and a branchpoint in the synthesis of polyamines. The protein is Acetylornithine deacetylase of Aliivibrio salmonicida (strain LFI1238) (Vibrio salmonicida (strain LFI1238)).